A 93-amino-acid chain; its full sequence is Pyrimidine/purine nucleoside phosphorylase (93 aa).

Belongs to the nucleoside phosphorylase PpnP family.

It catalyses the reaction a purine D-ribonucleoside + phosphate = a purine nucleobase + alpha-D-ribose 1-phosphate. The enzyme catalyses adenosine + phosphate = alpha-D-ribose 1-phosphate + adenine. It carries out the reaction cytidine + phosphate = cytosine + alpha-D-ribose 1-phosphate. The catalysed reaction is guanosine + phosphate = alpha-D-ribose 1-phosphate + guanine. It catalyses the reaction inosine + phosphate = alpha-D-ribose 1-phosphate + hypoxanthine. The enzyme catalyses thymidine + phosphate = 2-deoxy-alpha-D-ribose 1-phosphate + thymine. It carries out the reaction uridine + phosphate = alpha-D-ribose 1-phosphate + uracil. The catalysed reaction is xanthosine + phosphate = alpha-D-ribose 1-phosphate + xanthine. Catalyzes the phosphorolysis of diverse nucleosides, yielding D-ribose 1-phosphate and the respective free bases. Can use uridine, adenosine, guanosine, cytidine, thymidine, inosine and xanthosine as substrates. Also catalyzes the reverse reactions. In Cellvibrio japonicus (strain Ueda107) (Pseudomonas fluorescens subsp. cellulosa), this protein is Pyrimidine/purine nucleoside phosphorylase.